A 35-amino-acid polypeptide reads, in one-letter code: Conotoxin Cal6.1d (35 aa).

Residues 1–8 constitute a propeptide that is removed on maturation; sequence GLTRPSKR. Intrachain disulfides connect Cys9–Cys25, Cys16–Cys29, and Cys24–Cys34.

Belongs to the conotoxin O1 superfamily. In terms of tissue distribution, expressed by the venom duct.

It is found in the secreted. Functionally, probable neurotoxin with unknown target. Possibly targets ion channels. The protein is Conotoxin Cal6.1d of Californiconus californicus (California cone).